The chain runs to 267 residues: Chlorophyll a-b binding protein 3A, chloroplastic (267 aa).

Residues 1-34 (MAASTMALSSSTFAGKTVKLAPSSSEITGNGRIT) constitute a chloroplast transit peptide. The helical transmembrane segment at 153–173 (LVHAQSILAIWACQVVLMGAV) threads the bilayer. Residues Val-154, Ser-158, Gln-166, Glu-174, Arg-177, and Leu-183 each contribute to the chlorophyll b site. The chlorophyll a site is built by Lys-214, Glu-215, Asn-218, Arg-220, Gln-232, His-247, and Ala-256. A helical membrane pass occupies residues 221-241 (LAMFSMFGFFVQAIVTGKGPL). Phe-263 contributes to the chlorophyll b binding site.

Belongs to the light-harvesting chlorophyll a/b-binding (LHC) protein family. In terms of assembly, the LHC complex consists of chlorophyll a-b binding proteins. The cofactor is Binds at least 14 chlorophylls (8 Chl-a and 6 Chl-b) and carotenoids such as lutein and neoxanthin.. In terms of processing, photoregulated by reversible phosphorylation of its threonine residues.

The protein localises to the plastid. The protein resides in the chloroplast thylakoid membrane. Functionally, the light-harvesting complex (LHC) functions as a light receptor, it captures and delivers excitation energy to photosystems with which it is closely associated. In Solanum lycopersicum (Tomato), this protein is Chlorophyll a-b binding protein 3A, chloroplastic (CAB3A).